A 651-amino-acid polypeptide reads, in one-letter code: UvrABC system protein B (651 aa).

One can recognise a Helicase ATP-binding domain in the interval 25-411 (RGISCGAKEQ…TGGVATEQLI (387 aa)). ATP is bound at residue 38 to 45 (GVTGSGKT). The short motif at 91 to 114 (YYDYYQPEAYIPQSDVYIEKDALI) is the Beta-hairpin element. In terms of domain architecture, Helicase C-terminal spans 427-591 (DGQIHDVMCE…IVPRTIQKPV (165 aa)). The tract at residues 593-615 (TSLSERVGSSRKKVSRDTNTDPA) is disordered. A UVR domain is found at 616–651 (NRDIVELQKEMLLCAENLDFERAVEIRNEIKRLTAP).

Belongs to the UvrB family. In terms of assembly, forms a heterotetramer with UvrA during the search for lesions. Interacts with UvrC in an incision complex.

Its subcellular location is the cytoplasm. Functionally, the UvrABC repair system catalyzes the recognition and processing of DNA lesions. A damage recognition complex composed of 2 UvrA and 2 UvrB subunits scans DNA for abnormalities. Upon binding of the UvrA(2)B(2) complex to a putative damaged site, the DNA wraps around one UvrB monomer. DNA wrap is dependent on ATP binding by UvrB and probably causes local melting of the DNA helix, facilitating insertion of UvrB beta-hairpin between the DNA strands. Then UvrB probes one DNA strand for the presence of a lesion. If a lesion is found the UvrA subunits dissociate and the UvrB-DNA preincision complex is formed. This complex is subsequently bound by UvrC and the second UvrB is released. If no lesion is found, the DNA wraps around the other UvrB subunit that will check the other stand for damage. In Anaplasma marginale (strain St. Maries), this protein is UvrABC system protein B.